The sequence spans 218 residues: Ribonuclease T (218 aa).

The 175-residue stretch at 20–194 folds into the Exonuclease domain; sequence VVIDVETAGF…YDAERTAELF (175 aa). 4 residues coordinate Mg(2+): aspartate 23, glutamate 25, histidine 181, and aspartate 186. The active-site Proton donor/acceptor is histidine 181.

It belongs to the RNase T family. In terms of assembly, homodimer. It depends on Mg(2+) as a cofactor.

In terms of biological role, trims short 3' overhangs of a variety of RNA species, leaving a one or two nucleotide 3' overhang. Responsible for the end-turnover of tRNA: specifically removes the terminal AMP residue from uncharged tRNA (tRNA-C-C-A). Also appears to be involved in tRNA biosynthesis. This Baumannia cicadellinicola subsp. Homalodisca coagulata protein is Ribonuclease T.